Consider the following 448-residue polypeptide: Chromosomal replication initiator protein DnaA (448 aa).

The tract at residues 1 to 93 (MEQIVSSLWS…KPTEQNLSAS (93 aa)) is domain I, interacts with DnaA modulators. The interval 94 to 110 (STNKEELTQDTVHKFKT) is domain II. Residues 111-328 (GLNGRLTFDN…GAINRVSAWC (218 aa)) form a domain III, AAA+ region region. ATP-binding residues include Gly156, Gly158, Lys159, and Thr160. A domain IV, binds dsDNA region spans residues 329–448 (NFTKRQITID…YTNLTRKLSS (120 aa)).

This sequence belongs to the DnaA family. Oligomerizes as a right-handed, spiral filament on DNA at oriC.

The protein resides in the cytoplasm. Its function is as follows. Plays an essential role in the initiation and regulation of chromosomal replication. ATP-DnaA binds to the origin of replication (oriC) to initiate formation of the DNA replication initiation complex once per cell cycle. Binds the DnaA box (a 9 base pair repeat at the origin) and separates the double-stranded (ds)DNA. Forms a right-handed helical filament on oriC DNA; dsDNA binds to the exterior of the filament while single-stranded (ss)DNA is stabiized in the filament's interior. The ATP-DnaA-oriC complex binds and stabilizes one strand of the AT-rich DNA unwinding element (DUE), permitting loading of DNA polymerase. After initiation quickly degrades to an ADP-DnaA complex that is not apt for DNA replication. Binds acidic phospholipids. This chain is Chromosomal replication initiator protein DnaA, found in Haemophilus ducreyi (strain 35000HP / ATCC 700724).